Reading from the N-terminus, the 146-residue chain is 3-dehydroquinate dehydratase (146 aa).

Tyrosine 24 serves as the catalytic Proton acceptor. Substrate contacts are provided by asparagine 73, histidine 79, and aspartate 86. Histidine 99 (proton donor) is an active-site residue. Substrate contacts are provided by residues leucine 100–serine 101 and arginine 110.

Belongs to the type-II 3-dehydroquinase family. In terms of assembly, homododecamer.

It catalyses the reaction 3-dehydroquinate = 3-dehydroshikimate + H2O. It participates in metabolic intermediate biosynthesis; chorismate biosynthesis; chorismate from D-erythrose 4-phosphate and phosphoenolpyruvate: step 3/7. Catalyzes a trans-dehydration via an enolate intermediate. The chain is 3-dehydroquinate dehydratase from Shewanella baltica (strain OS185).